A 631-amino-acid polypeptide reads, in one-letter code: Glycosyltransferase-like protein LARGE (631 aa).

Topologically, residues 1-6 (MQSNYS) are cytoplasmic. The helical; Signal-anchor for type II membrane protein transmembrane segment at 7–27 (ISYFLLILFTGTSSYFTIWNF) threads the bilayer. Residues 28 to 631 (VDHTRVGAFP…TASRLGIKLR (604 aa)) are Lumenal-facing. N-linked (GlcNAc...) asparagine glycosylation is found at N95, N105, N167, N177, N287, N400, N485, N502, N521, N529, and N593.

The protein belongs to the glycosyltransferase 8 family.

It is found in the golgi apparatus membrane. In terms of biological role, probable glycosyltransferase. The protein is Glycosyltransferase-like protein LARGE (lge-1) of Caenorhabditis elegans.